The sequence spans 508 residues: Glycogen synthase (508 aa).

Lys-27 is an ADP-alpha-D-glucose binding site.

The protein belongs to the glycosyltransferase 1 family. Bacterial/plant glycogen synthase subfamily.

The enzyme catalyses [(1-&gt;4)-alpha-D-glucosyl](n) + ADP-alpha-D-glucose = [(1-&gt;4)-alpha-D-glucosyl](n+1) + ADP + H(+). It functions in the pathway glycan biosynthesis; glycogen biosynthesis. Synthesizes alpha-1,4-glucan chains using ADP-glucose. This Photobacterium profundum (strain SS9) protein is Glycogen synthase.